Here is a 686-residue protein sequence, read N- to C-terminus: Leucine-rich repeat-containing protein 49 (686 aa).

LRR repeat units follow at residues H113–Q134, K135–R156, C157–K178, S179–C200, E201–D222, S223–P244, and C245–A266. The LRRCT domain maps to N279–L317. Residues M303–T341 adopt a coiled-coil conformation. The interval A360 to E388 is disordered.

As to quaternary structure, part of the neuronal tubulin polyglutamylase complex which contains TPGS1, TPGS2, TTLL1, LRRC49 and NICN1. Interacts with PCM1; TTLL1, TPGS1, TPGS2 and LRRC49.

It is found in the cytoplasm. It localises to the cytoskeleton. The protein localises to the microtubule organizing center. Its subcellular location is the centrosome. The protein resides in the centriolar satellite. Functionally, subunit of the tubulin polyglutamylase complex (TPGC). The complex mediates cilia and flagella polyglutamylation which is essential for their biogenesis and motility. The chain is Leucine-rich repeat-containing protein 49 from Homo sapiens (Human).